A 90-amino-acid polypeptide reads, in one-letter code: Protein LIM1 (90 aa).

An N-terminal signal peptide occupies residues 1–26 (MASMKSLATAILVVLLLAALSREGRS). Disulfide bonds link Cys29/Cys66, Cys39/Cys55, Cys56/Cys81, and Cys68/Cys88.

Belongs to the A9/FIL1 family.

The protein localises to the secreted. The sequence is that of Protein LIM1 (LIM1) from Lilium longiflorum (Trumpet lily).